The chain runs to 621 residues: Chaperone protein HtpG (621 aa).

The a; substrate-binding stretch occupies residues 1 to 341 (MSNQEYTFQT…SEDLPLNVSR (341 aa)). The tract at residues 342–547 (EILQQNKILA…GDEQNAMMAN (206 aa)) is b. The segment at 548–621 (LMRQMGQNMP…RLNSVLLKAL (74 aa)) is c.

Belongs to the heat shock protein 90 family. As to quaternary structure, homodimer.

The protein resides in the cytoplasm. Its function is as follows. Molecular chaperone. Has ATPase activity. The polypeptide is Chaperone protein HtpG (Helicobacter acinonychis (strain Sheeba)).